A 131-amino-acid chain; its full sequence is uncharacterized protein (131 aa).

The tract at residues 13-32 (TYSPLPEPPPTPALGGQRGP) is disordered.

This is an uncharacterized protein from Homo sapiens (Human).